Reading from the N-terminus, the 90-residue chain is Small ribosomal subunit protein bS16 (90 aa).

Belongs to the bacterial ribosomal protein bS16 family.

This is Small ribosomal subunit protein bS16 from Heliobacterium modesticaldum (strain ATCC 51547 / Ice1).